Consider the following 224-residue polypeptide: Probable C-&gt;U-editing enzyme APOBEC-2 (224 aa).

Positions 1–25 are disordered; the sequence is MAQKEEAAAAAEPASQNGEEVENLE. The Zn(2+) site is built by Glu-60 and His-98. Residues 64–169 form the CMP/dCMP-type deaminase domain; that stretch reads GRNKTFLCYV…PEIQAALRKL (106 aa). Residue Glu-100 is the Proton donor of the active site. Residues Cys-128 and Cys-131 each coordinate Zn(2+).

This sequence belongs to the cytidine and deoxycytidylate deaminase family. Homotetramer. Zn(2+) is required as a cofactor.

It carries out the reaction cytidine(6666) in apoB mRNA + H2O + H(+) = uridine(6666) in apoB mRNA + NH4(+). In terms of biological role, probable C to U editing enzyme whose physiological substrate is not yet known. Does not display detectable apoB mRNA editing. Has a low intrinsic cytidine deaminase activity. May play a role in the epigenetic regulation of gene expression through the process of active DNA demethylation. The chain is Probable C-&gt;U-editing enzyme APOBEC-2 (APOBEC2) from Bos taurus (Bovine).